Reading from the N-terminus, the 448-residue chain is UDP-N-acetylmuramoylalanine--D-glutamate ligase (448 aa).

Residue 112 to 118 (GSNAKST) participates in ATP binding.

The protein belongs to the MurCDEF family.

Its subcellular location is the cytoplasm. It catalyses the reaction UDP-N-acetyl-alpha-D-muramoyl-L-alanine + D-glutamate + ATP = UDP-N-acetyl-alpha-D-muramoyl-L-alanyl-D-glutamate + ADP + phosphate + H(+). It participates in cell wall biogenesis; peptidoglycan biosynthesis. In terms of biological role, cell wall formation. Catalyzes the addition of glutamate to the nucleotide precursor UDP-N-acetylmuramoyl-L-alanine (UMA). The sequence is that of UDP-N-acetylmuramoylalanine--D-glutamate ligase from Acinetobacter baumannii (strain AB307-0294).